The sequence spans 71 residues: DNA-directed RNA polymerase subunit epsilon (71 aa).

The protein belongs to the RNA polymerase subunit epsilon family. RNAP is composed of a core of 2 alpha, a beta and a beta' subunit. The core is associated with a delta subunit, and at least one of epsilon or omega. When a sigma factor is associated with the core the holoenzyme is formed, which can initiate transcription.

The enzyme catalyses RNA(n) + a ribonucleoside 5'-triphosphate = RNA(n+1) + diphosphate. Functionally, a non-essential component of RNA polymerase (RNAP). This Geobacillus thermodenitrificans (strain NG80-2) protein is DNA-directed RNA polymerase subunit epsilon.